The chain runs to 219 residues: Octanoyltransferase (219 aa).

The BPL/LPL catalytic domain occupies 37 to 219; the sequence is EHSPDQLWIL…DFNDVQVILQ (183 aa). Substrate is bound by residues 76 to 83, 143 to 145, and 156 to 158; these read RGGQVTWH, SLG, and GLA. Cys-174 (acyl-thioester intermediate) is an active-site residue.

This sequence belongs to the LipB family.

The protein resides in the cytoplasm. It carries out the reaction octanoyl-[ACP] + L-lysyl-[protein] = N(6)-octanoyl-L-lysyl-[protein] + holo-[ACP] + H(+). Its pathway is protein modification; protein lipoylation via endogenous pathway; protein N(6)-(lipoyl)lysine from octanoyl-[acyl-carrier-protein]: step 1/2. Its function is as follows. Catalyzes the transfer of endogenously produced octanoic acid from octanoyl-acyl-carrier-protein onto the lipoyl domains of lipoate-dependent enzymes. Lipoyl-ACP can also act as a substrate although octanoyl-ACP is likely to be the physiological substrate. The protein is Octanoyltransferase of Acinetobacter baylyi (strain ATCC 33305 / BD413 / ADP1).